Here is a 389-residue protein sequence, read N- to C-terminus: Homoserine O-acetyltransferase (389 aa).

Residues 1–21 (MAALRAGKTNNEADQPSSPVL) form a disordered region. Positions 8-18 (KTNNEADQPSS) are enriched in polar residues. One can recognise an AB hydrolase-1 domain in the interval 56 to 366 (NAILVCHALT…DRGHDAFLLD (311 aa)). The active-site Nucleophile is S161. Substrate is bound at residue R231. Residues D327 and H360 contribute to the active site. D361 provides a ligand contact to substrate.

Belongs to the AB hydrolase superfamily. MetX family. Homodimer.

The protein resides in the cytoplasm. The enzyme catalyses L-homoserine + acetyl-CoA = O-acetyl-L-homoserine + CoA. It participates in amino-acid biosynthesis; L-methionine biosynthesis via de novo pathway; O-acetyl-L-homoserine from L-homoserine: step 1/1. Functionally, transfers an acetyl group from acetyl-CoA to L-homoserine, forming acetyl-L-homoserine. This is Homoserine O-acetyltransferase from Mesorhizobium japonicum (strain LMG 29417 / CECT 9101 / MAFF 303099) (Mesorhizobium loti (strain MAFF 303099)).